Reading from the N-terminus, the 1293-residue chain is Phosphoribosylformylglycinamidine synthase (1293 aa).

ATP is bound by residues Gly-305 to Asp-316, Thr-384 to Tyr-386, and Ala-676. The interval Ala-307–Pro-326 is disordered. Mg(2+) contacts are provided by Asp-677, Glu-716, Asn-720, and Asp-884. Ser-886 lines the ATP pocket. The region spanning Met-1040–Gly-1293 is the Glutamine amidotransferase type-1 domain. Cys-1133 acts as the Nucleophile in catalysis. Catalysis depends on residues His-1258 and Glu-1260.

In the N-terminal section; belongs to the FGAMS family. In terms of assembly, monomer.

Its subcellular location is the cytoplasm. The enzyme catalyses N(2)-formyl-N(1)-(5-phospho-beta-D-ribosyl)glycinamide + L-glutamine + ATP + H2O = 2-formamido-N(1)-(5-O-phospho-beta-D-ribosyl)acetamidine + L-glutamate + ADP + phosphate + H(+). It functions in the pathway purine metabolism; IMP biosynthesis via de novo pathway; 5-amino-1-(5-phospho-D-ribosyl)imidazole from N(2)-formyl-N(1)-(5-phospho-D-ribosyl)glycinamide: step 1/2. Its function is as follows. Phosphoribosylformylglycinamidine synthase involved in the purines biosynthetic pathway. Catalyzes the ATP-dependent conversion of formylglycinamide ribonucleotide (FGAR) and glutamine to yield formylglycinamidine ribonucleotide (FGAM) and glutamate. The protein is Phosphoribosylformylglycinamidine synthase of Shewanella frigidimarina (strain NCIMB 400).